The following is a 303-amino-acid chain: GTP cyclohydrolase FolE2 (303 aa).

The protein belongs to the GTP cyclohydrolase IV family.

The enzyme catalyses GTP + H2O = 7,8-dihydroneopterin 3'-triphosphate + formate + H(+). It participates in cofactor biosynthesis; 7,8-dihydroneopterin triphosphate biosynthesis; 7,8-dihydroneopterin triphosphate from GTP: step 1/1. Its function is as follows. Converts GTP to 7,8-dihydroneopterin triphosphate. The sequence is that of GTP cyclohydrolase FolE2 from Exiguobacterium sp. (strain ATCC BAA-1283 / AT1b).